The primary structure comprises 1522 residues: Lysophospholipase nte1 (1522 aa).

Positions 1–24 are disordered; it reads MADGVTQVDSTGLHSFSPSPSLSS. At 1–65 the chain is on the cytoplasmic side; it reads MADGVTQVDS…LPPVPTTMAG (65 aa). Low complexity predominate over residues 15-24; the sequence is SFSPSPSLSS. Residues 66–86 traverse the membrane as a helical segment; it reads WIGWVFSFFFQVIPSVLYWII. Over 87–108 the chain is Lumenal; it reads TFSTITLPTWLFTLFSMSLTFT. A helical transmembrane segment spans residues 109 to 129; the sequence is MNFTTLLLIVLAVVSTISWFI. The Cytoplasmic segment spans residues 130 to 1522; the sequence is RYRFLNMYSR…RTLAPRRASI (1393 aa). Disordered stretches follow at residues 308 to 384, 523 to 544, and 757 to 776; these read VPNS…SVHP, RAAT…GVSP, and TTTA…SRRR. Positions 369–381 are enriched in basic residues; sequence ESRKHSSRKRRKS. A nucleoside 3',5'-cyclic phosphate is bound by residues 680-800 and 840-960; these read GGTS…AVAS and RLTS…IAQR. The region spanning 1219-1383 is the PNPLA domain; it reads LVLGGGGARG…IDNLTVDHMK (165 aa). The GXGXXG signature appears at 1223–1228; sequence GGGARG. The short motif at 1250 to 1254 is the GXSXG element; that stretch reads GTSIG. Ser1252 functions as the Nucleophile in the catalytic mechanism. Asp1370 serves as the catalytic Proton acceptor. Positions 1370–1372 match the DGA/G motif; the sequence is DGG. The disordered stretch occupies residues 1501–1522; sequence LPEETEEKKKLQRTLAPRRASI.

This sequence belongs to the NTE family.

Its subcellular location is the endoplasmic reticulum membrane. It catalyses the reaction a 1-acyl-sn-glycero-3-phosphocholine + H2O = sn-glycerol 3-phosphocholine + a fatty acid + H(+). Inhibited by organophosphorus esters. In terms of biological role, intracellular phospholipase B that catalyzes the double deacylation of phosphatidylcholine (PC) to glycerophosphocholine (GroPCho). Plays an important role in membrane lipid homeostasis. Responsible for the rapid PC turnover in response to inositol, elevated temperatures, or when choline is present in the growth medium. The polypeptide is Lysophospholipase nte1 (nte1) (Aspergillus fumigatus (strain ATCC MYA-4609 / CBS 101355 / FGSC A1100 / Af293) (Neosartorya fumigata)).